The sequence spans 82 residues: uncharacterized protein (82 aa).

Basic and acidic residues predominate over residues Met-1–Ser-11. Residues Met-1–Arg-25 are disordered. Over residues Ser-16 to Arg-25 the composition is skewed to polar residues.

This is an uncharacterized protein from Human cytomegalovirus (strain AD169) (HHV-5).